Consider the following 449-residue polypeptide: UDP-N-acetylmuramate--L-alanine ligase (449 aa).

121-127 contributes to the ATP binding site; that stretch reads GAHGKSS.

The protein belongs to the MurCDEF family.

The protein localises to the cytoplasm. It carries out the reaction UDP-N-acetyl-alpha-D-muramate + L-alanine + ATP = UDP-N-acetyl-alpha-D-muramoyl-L-alanine + ADP + phosphate + H(+). It participates in cell wall biogenesis; peptidoglycan biosynthesis. In terms of biological role, cell wall formation. The protein is UDP-N-acetylmuramate--L-alanine ligase of Helicobacter pylori (strain ATCC 700392 / 26695) (Campylobacter pylori).